A 301-amino-acid chain; its full sequence is MANCEFSPVSGDKPCCRLSRRAQVCLGVCLLVLLILVVVVAVVLPRWRQQWSGSGTTSRFPETVLARCVKYTEVHPEMRHVDCQSVWDAFKGAFISKYPCNITEEDYQPLVKLGTQTVPCNKTLLWSRIKDLAHQFTQVQRDMFTLEDMLLGYLADDLTWCGEFNTFEINYQSCPDWRKDCSNNPVSVFWKTVSRRFAETACGVVHVMLNGSRSKIFDKNSTFGSVEVHNLQPEKVQALEAWVIHGGREDSRDLCQDPTIKELESIISKRNIRFFCKNIYRPDKFLQCVKNPEDSSCLSGI.

Over 1–21 the chain is Cytoplasmic; the sequence is MANCEFSPVSGDKPCCRLSRR. Residues 22-43 traverse the membrane as a helical; Signal-anchor for type II membrane protein segment; sequence AQVCLGVCLLVLLILVVVVAVV. Residues 44 to 301 lie on the Extracellular side of the membrane; it reads LPRWRQQWSG…PEDSSCLSGI (258 aa). 3 disulfides stabilise this stretch: Cys-68-Cys-83, Cys-100-Cys-181, and Cys-161-Cys-174. N-linked (GlcNAc...) asparagine glycosylation is present at Asn-101. Cys-120 is a catalytic residue. A glycan (N-linked (GlcNAc...) asparagine) is linked at Asn-121. Cys-202 is a catalytic residue. Asn-210 and Asn-220 each carry an N-linked (GlcNAc...) asparagine glycan. Disulfide bonds link Cys-255–Cys-276 and Cys-288–Cys-297.

The protein belongs to the ADP-ribosyl cyclase family. In terms of assembly, homodimer.

Its subcellular location is the cell surface. The protein localises to the membrane. It catalyses the reaction NAD(+) = cyclic ADP-beta-D-ribose + nicotinamide + H(+). The enzyme catalyses 2'-phospho-cyclic ADP-ribose + nicotinate = nicotinate-adenine dinucleotide phosphate. The catalysed reaction is NAD(+) + H2O = ADP-D-ribose + nicotinamide + H(+). It carries out the reaction nicotinate + NADP(+) = nicotinate-adenine dinucleotide phosphate + nicotinamide. With respect to regulation, ATP inhibits the cADPR hydrolyzing activity. Its function is as follows. Synthesizes cyclic ADP-ribose (cADPR), a second messenger for glucose-induced insulin secretion. Synthesizes the Ca(2+) mobilizer nicotinate-adenine dinucleotide phosphate, NAADP(+), from 2'-phospho-cADPR and nicotinic acid, as well as from NADP(+) and nicotinic acid. Also has cADPR hydrolase activity. The sequence is that of ADP-ribosyl cyclase/cyclic ADP-ribose hydrolase 1 (CD38) from Macaca fascicularis (Crab-eating macaque).